Consider the following 777-residue polypeptide: Disintegrin and metalloproteinase domain-containing protein 5 (777 aa).

A signal peptide spans Met-1–Ala-16. A propeptide spanning residues Gly-17–Tyr-142 is cleaved from the precursor. Residues Gly-17–Arg-706 lie on the Extracellular side of the membrane. Residues Asn-49 and Asn-123 are each glycosylated (N-linked (GlcNAc...) asparagine). The 198-residue stretch at Arg-185–Ser-382 folds into the Peptidase M12B domain. Cystine bridges form between Cys-294–Cys-377, Cys-336–Cys-361, Cys-338–Cys-343, and Cys-456–Cys-477. Positions Arg-396–Asn-485 constitute a Disintegrin domain. An N-linked (GlcNAc...) asparagine glycan is attached at Asn-566. One can recognise an EGF-like domain in the interval Asn-633–Ala-667. 3 disulfide bridges follow: Cys-637/Cys-649, Cys-643/Cys-655, and Cys-657/Cys-666. A helical membrane pass occupies residues Phe-707–Lys-727. Topologically, residues Gln-728–Gln-777 are cytoplasmic. Positions Ser-744–Glu-760 are enriched in polar residues. The interval Ser-744–Gln-777 is disordered. Residues Phe-763–Gln-777 show a composition bias toward basic and acidic residues.

As to quaternary structure, interacts with TEX101. Post-translationally, subject to proteolytic processing during epididymal transit of spermatozoa. In terms of tissue distribution, detected in testis.

It localises to the membrane. Its function is as follows. This is a non catalytic metalloprotease-like protein. May play a role in sperm-egg fusion. The protein is Disintegrin and metalloproteinase domain-containing protein 5 (ADAM5) of Cavia porcellus (Guinea pig).